We begin with the raw amino-acid sequence, 506 residues long: MAVDMELDGGGDGKGKAPPQISLSGLFLACMVAGGVQYGWALQLSLLTPYVQTLGIPHALTSVMWLCGPIAGLIVQPCVGLYSDKCTSSLGRRRPFILTGCIIICISVIVIGFSSDIGYALGDTTEDCKVYRGPRYHAAAAFILGFWLLDFSNNTVQGPARALMADLSGRHGPSAANAIFCSWMALGNILGYSSGSTNDWHKWFPFLMTRACCEACANLKAAFLVAVVFLGLSTAVTMVFAREVALDPVAAAKRNEGEASGLLAVFKGMKNLPVGMPSVLIVTGLTWLSWFPFILFDTDWMGREIYHGRPDGSPAEVTAFQEGVRQGAFGLLLNSIVLGISSFLIEPMCRRLGARAVWVMSSAVVCVAMAAVSVLSAWSLGDFGGSVQDAARAPAEEGGVRASALALFVFLGLPFAVLCSVPFAVTAQLAASRGGGQGLCTGVLNISIVVPQMAIALGAGPWDELFGEGNIPAFAMASVFAAAAAAAGVVLLPKVSVRSVSMAGGH.

Topologically, residues Met-1–Gln-20 are cytoplasmic. Residues Ile-21 to Ala-41 form a helical membrane-spanning segment. At Leu-42 to Leu-54 the chain is on the extracellular side. The chain crosses the membrane as a helical span at residues Gly-55–Val-75. Over Gln-76–Arg-94 the chain is Cytoplasmic. A helical membrane pass occupies residues Pro-95–Ser-115. Residues Asp-116 to Arg-135 lie on the Extracellular side of the membrane. Residues Tyr-136–Val-156 traverse the membrane as a helical segment. Residues Gln-157 to His-171 are Cytoplasmic-facing. A helical transmembrane segment spans residues Gly-172 to Tyr-192. The Extracellular portion of the chain corresponds to Ser-193–Lys-220. The helical transmembrane segment at Ala-221–Ala-241 threads the bilayer. Residues Arg-242 to Gly-275 lie on the Cytoplasmic side of the membrane. A helical membrane pass occupies residues Met-276 to Phe-296. Topologically, residues Asp-297–Gly-327 are extracellular. Residues Ala-328 to Met-348 form a helical membrane-spanning segment. At Cys-349–Arg-355 the chain is on the cytoplasmic side. Residues Ala-356 to Ser-376 traverse the membrane as a helical segment. Residues Ala-377–Ala-404 lie on the Extracellular side of the membrane. The helical transmembrane segment at Leu-405–Val-425 threads the bilayer. Topologically, residues Thr-426–Thr-441 are cytoplasmic. The helical transmembrane segment at Gly-442–Trp-462 threads the bilayer. Residues Asp-463–Asn-470 lie on the Extracellular side of the membrane. Residues Ile-471–Leu-491 form a helical membrane-spanning segment. Over Leu-492 to His-506 the chain is Cytoplasmic.

Belongs to the glycoside-pentoside-hexuronide (GPH) cation symporter transporter (TC 2.A.2.4) family. Homodimer. Widely expressed. Highest expression in sink leaves and lowest in germinating seeds.

The protein resides in the cell membrane. The protein operates within glycan biosynthesis; sucrose metabolism. Responsible for the transport of sucrose into the cell, with the concomitant uptake of protons (symport system). May also transport other glucosides. The protein is Sucrose transport protein SUT3 (SUT3) of Oryza sativa subsp. japonica (Rice).